Consider the following 2832-residue polypeptide: Cyclic beta-(1,2)-glucan synthase NdvB (2832 aa).

7 consecutive transmembrane segments (helical) span residues 411–431, 444–464, 810–830, 831–851, 880–900, 938–958, and 959–979; these read FAIA…VYAF, IMLL…FNTV, LIPV…EPTP, ALIW…LSLI, QVAL…DAIV, WTAP…DTGL, and PFIG…AWFV. Residues 1299 to 1506 enclose the Glycoamylase-like domain; the sequence is LASEARLTSL…NGQLREWFHA (208 aa).

It belongs to the NdvB family.

It localises to the cell inner membrane. It carries out the reaction [(1-&gt;2)-beta-D-glucosyl](n) + UDP-alpha-D-glucose = [(1-&gt;2)-beta-D-glucosyl](n+1) + UDP + H(+). Its function is as follows. Involved in the biosynthesis of cyclic beta-(1,2)-glucan. It seems that NdvB is involved in three enzymatic activities. First, it may catalyze the transfer of the first glucose from UDP-Glc to an unknown amino acid. In the second enzymatic activity (UDP-Glc:beta-(1,2) oligosaccharide glucosyltransferase), it may be responsible for chain elongation. Finally, in the third activity, it may catalyze glucan cyclization and release from the protein. NdvB is also involved in nodule invasion and in bacteroid development. This is Cyclic beta-(1,2)-glucan synthase NdvB from Rhizobium meliloti (strain 1021) (Ensifer meliloti).